We begin with the raw amino-acid sequence, 209 residues long: Protein lin-28 homolog A (209 aa).

The tract at residues 1-31 (MGSVSNQQFAGGCAKAAEKAPEEAPPDAARA) is disordered. Glycine 2 carries the N-acetylglycine modification. Serine 3 is modified (phosphoserine). The CSD domain maps to 39–112 (HGAGICKWFN…GLESIRVTGP (74 aa)). Residues 113–136 (GGVFCIGSERRPKGKNMQKRRSKG) are flexible linker. Phosphoserine is present on serine 120. 2 consecutive CCHC-type zinc fingers follow at residues 137–154 (DRCYNCGGLDHHAKECKL) and 159–176 (KKCHFCQSINHMVASCPL). Residues 177–209 (KAQQGPSSQGKPAYFREEEEEIHSPALLPEAQN) are disordered. Serine 200 carries the post-translational modification Phosphoserine.

It belongs to the lin-28 family. In terms of assembly, monomer. During skeletal muscle differentiation, associated with translation initiation complexes in the polysomal compartment. Directly interacts with EIF3S2. Interacts with NCL in an RNA-dependent manner. Interacts with TUT4 in the presence of pre-let-7 RNA. Expressed in embryonic stem cells (ES cells), spermatagonia and testis. Expressed in numerous epithelial tissues including the epithelia of the small intestine, the intralobular duct epithelium of the mammary gland and the epithelia of Henle's loop in the kidney and in the collecting duct (at protein level). Also expressed in the myocardium and skeletal muscle (at protein level).

It is found in the cytoplasm. It localises to the rough endoplasmic reticulum. The protein resides in the P-body. Its subcellular location is the stress granule. The protein localises to the nucleus. It is found in the nucleolus. In terms of biological role, RNA-binding protein that inhibits processing of pre-let-7 miRNAs and regulates translation of mRNAs that control developmental timing, pluripotency and metabolism. Seems to recognize a common structural G-quartet (G4) feature in its miRNA and mRNA targets. 'Translational enhancer' that drives specific mRNAs to polysomes and increases the efficiency of protein synthesis. Its association with the translational machinery and target mRNAs results in an increased number of initiation events per molecule of mRNA and, indirectly, in mRNA stabilization. Binds IGF2 mRNA, MYOD1 mRNA, ARBP/36B4 ribosomal protein mRNA and its own mRNA. Essential for skeletal muscle differentiation program through the translational up-regulation of IGF2 expression. Suppressor of microRNA (miRNA) biogenesis, including that of let-7, miR107, miR-143 and miR-200c. Specifically binds the miRNA precursors (pre-miRNAs), recognizing an 5'-GGAG-3' motif found in pre-miRNA terminal loop, and recruits TUT4 and TUT7 uridylyltransferaseS. This results in the terminal uridylation of target pre-miRNAs. Uridylated pre-miRNAs fail to be processed by Dicer and undergo degradation. The repression of let-7 expression is required for normal development and contributes to maintain the pluripotent state by preventing let-7-mediated differentiation of embryonic stem cells. Localized to the periendoplasmic reticulum area, binds to a large number of spliced mRNAs and inhibits the translation of mRNAs destined for the ER, reducing the synthesis of transmembrane proteins, ER or Golgi lumen proteins, and secretory proteins. Binds to and enhances the translation of mRNAs for several metabolic enzymes, such as PFKP, PDHA1 or SDHA, increasing glycolysis and oxidative phosphorylation. Which, with the let-7 repression may enhance tissue repair in adult tissue. This Mus musculus (Mouse) protein is Protein lin-28 homolog A (Lin28a).